We begin with the raw amino-acid sequence, 31 residues long: Cyclotide cter-D (31 aa).

The cyclopeptide (Gly-Asn) cross-link spans 1 to 31 (GIPCAESCVWIPCTVTALLGCSCKDKVCYLN). 3 cysteine pairs are disulfide-bonded: Cys4–Cys21, Cys8–Cys23, and Cys13–Cys28.

Post-translationally, contains 3 disulfide bonds. This is a cyclic peptide. As to expression, expressed in root, seed and nodule but not in flower, stem, shoot, leaf and pod.

Functionally, probably participates in a plant defense mechanism. This is Cyclotide cter-D from Clitoria ternatea (Butterfly pea).